A 1819-amino-acid polypeptide reads, in one-letter code: Non-reducing polyketide synthase nscA (1819 aa).

The tract at residues R25–H277 is N-terminal acylcarrier protein transacylase domain (SAT). One can recognise a Ketosynthase family 3 (KS3) domain in the interval S413–D846. Residues C586, H721, and H764 each act as for beta-ketoacyl synthase activity in the active site. The malonyl-CoA:ACP transacylase (MAT) domain stretch occupies residues F952 to S1249. Residues T1339–P1658 form a product template (PT) domain region. The tract at residues H1343–A1479 is N-terminal hotdog fold. A PKS/mFAS DH domain is found at H1343–D1653. The active-site Proton acceptor; for dehydratase activity is the H1375. Residues A1507–D1653 form a C-terminal hotdog fold region. Residue D1564 is the Proton donor; for dehydratase activity of the active site. The disordered stretch occupies residues S1703 to P1742. Residues T1719–P1730 show a composition bias toward low complexity. Residues P1742 to C1819 enclose the Carrier domain. S1779 is modified (O-(pantetheine 4'-phosphoryl)serine).

Requires pantetheine 4'-phosphate as cofactor.

Its pathway is secondary metabolite biosynthesis. Functionally, non-reducing polyketide synthase; part of the gene cluster that mediates the biosynthesis of neosartoricin B, a prenylated anthracenone that probably exhibits T-cell antiproliferative activity, suggestive of a physiological role as an immunosuppressive agent. The non-reducing polyketide synthase nscA probably synthesizes and cyclizes the decaketide backbone. The hydrolase nscB then mediates the product release through hydrolysis followed by spontaneous decarboxylation. The prenyltransferase nscD catalyzes the addition of the dimethylallyl group to the aromatic C5. The FAD-dependent monooxygenase nscC is then responsible for the stereospecific hydroxylation at C2. Neosartoricin B can be converted into two additional compounds neosartoricins C and D. Neosartoricin C is a spirocyclic compound that is cyclized through the attack of C3 hydroxyl on C14, followed by dehydration. On the other hand, neosartoricin D is a further cyclized compound in which attack of C2 on C14 in neosartoricin C results in the formation of the acetal-containing dioxabicyclo-octanone ring. Both of these compounds are novel and possibly represent related metabolites of the gene cluster. The polypeptide is Non-reducing polyketide synthase nscA (Trichophyton verrucosum (strain HKI 0517)).